We begin with the raw amino-acid sequence, 755 residues long: Biodegradative arginine decarboxylase (755 aa).

Lys-386 carries the N6-(pyridoxal phosphate)lysine modification.

This sequence belongs to the Orn/Lys/Arg decarboxylase class-I family. In terms of assembly, homodecamer. The basic unit is a homodimer, organized into a ring of giving a pentamer of five homodimers. It depends on pyridoxal 5'-phosphate as a cofactor.

The protein localises to the cytoplasm. The enzyme catalyses L-arginine + H(+) = agmatine + CO2. Its activity is regulated as follows. Homodimers are probably inactive, their assembly into a homodecamer at low pH requires neutralization of negatively charged residues. This uses cytoplasmic protons, contributing pH regulation and stabilizes the homodecamer. In terms of biological role, component of the acid-resistance (AR) system allowing enteric pathogens to survive the acidic environment in the stomach. ADC can be found in two forms: biodegradative (this enzyme) and biosynthetic (speA). The biodegradative form plays a role in regulating pH by consuming proteins. Converts arginine imported by AdiC to agmatine which is then exported by AdiC. This Escherichia coli (strain K12) protein is Biodegradative arginine decarboxylase (adiA).